The sequence spans 168 residues: MALLIEDKKQIVAEVSEVASKAFAAVVADYQGLSVEQLTTLRVEARKLGVTTRIVRNTLAKRAFQGTQFDILNDNLVGPTILGFSTSEDDMGAAARLFEEFAKTNKAFELKAAAFDGKVYQGADVSVIANLPNQEKALTMLASVLQAPISKLGRLITALKEKNESEAA.

It belongs to the universal ribosomal protein uL10 family. As to quaternary structure, part of the ribosomal stalk of the 50S ribosomal subunit. The N-terminus interacts with L11 and the large rRNA to form the base of the stalk. The C-terminus forms an elongated spine to which L12 dimers bind in a sequential fashion forming a multimeric L10(L12)X complex.

Forms part of the ribosomal stalk, playing a central role in the interaction of the ribosome with GTP-bound translation factors. The sequence is that of Large ribosomal subunit protein uL10 from Acinetobacter baumannii (strain AB307-0294).